Consider the following 227-residue polypeptide: MANINFGFEHHARKLYSGAIEQGITGSLVPMVIETSGRGERAFDIFSRLLRERIIFLGSGIDEHVAGLIMAQLIFLESEDPERDIYIYVNSPGGSVSAGLGIYDTMQYIRPDVSTVCVGMAASMGAFLLASGTKGKRASLPHSRIMIHQPSGGAQGQESDIIIQAREIEKIRRLLEEILASHTGKDVQQVREDSERDRWMNAQEALEYGIIDQIFEKRPKPDKEKES.

Serine 123 acts as the Nucleophile in catalysis. Histidine 148 is a catalytic residue.

The protein belongs to the peptidase S14 family. As to quaternary structure, fourteen ClpP subunits assemble into 2 heptameric rings which stack back to back to give a disk-like structure with a central cavity, resembling the structure of eukaryotic proteasomes.

It is found in the cytoplasm. The enzyme catalyses Hydrolysis of proteins to small peptides in the presence of ATP and magnesium. alpha-casein is the usual test substrate. In the absence of ATP, only oligopeptides shorter than five residues are hydrolyzed (such as succinyl-Leu-Tyr-|-NHMec, and Leu-Tyr-Leu-|-Tyr-Trp, in which cleavage of the -Tyr-|-Leu- and -Tyr-|-Trp bonds also occurs).. Functionally, cleaves peptides in various proteins in a process that requires ATP hydrolysis. Has a chymotrypsin-like activity. Plays a major role in the degradation of misfolded proteins. This Chlorobium phaeobacteroides (strain DSM 266 / SMG 266 / 2430) protein is ATP-dependent Clp protease proteolytic subunit.